A 547-amino-acid chain; its full sequence is Chaperonin GroEL (547 aa).

ATP contacts are provided by residues 30 to 33, Lys51, 87 to 91, Gly415, 479 to 481, and Asp495; these read TLGP, DGTTT, and NAA. The interval 524-547 is disordered; the sequence is APKKDEPTPPAAGGGMGGMGGMDF. Gly residues predominate over residues 535–547; the sequence is AGGGMGGMGGMDF.

The protein belongs to the chaperonin (HSP60) family. In terms of assembly, forms a cylinder of 14 subunits composed of two heptameric rings stacked back-to-back. Interacts with the co-chaperonin GroES.

Its subcellular location is the cytoplasm. It carries out the reaction ATP + H2O + a folded polypeptide = ADP + phosphate + an unfolded polypeptide.. Its function is as follows. Together with its co-chaperonin GroES, plays an essential role in assisting protein folding. The GroEL-GroES system forms a nano-cage that allows encapsulation of the non-native substrate proteins and provides a physical environment optimized to promote and accelerate protein folding. This chain is Chaperonin GroEL, found in Xylella fastidiosa (strain M23).